We begin with the raw amino-acid sequence, 410 residues long: Imidazolonepropionase (410 aa).

Fe(3+)-binding residues include His-71 and His-73. His-71 and His-73 together coordinate Zn(2+). 3 residues coordinate 4-imidazolone-5-propanoate: Arg-80, Tyr-143, and His-175. Position 143 (Tyr-143) interacts with N-formimidoyl-L-glutamate. A Fe(3+)-binding site is contributed by His-235. Position 235 (His-235) interacts with Zn(2+). 4-imidazolone-5-propanoate is bound at residue Glu-238. Asp-309 is a Fe(3+) binding site. Asp-309 lines the Zn(2+) pocket.

It belongs to the metallo-dependent hydrolases superfamily. HutI family. Requires Zn(2+) as cofactor. Fe(3+) serves as cofactor.

Its subcellular location is the cytoplasm. The enzyme catalyses 4-imidazolone-5-propanoate + H2O = N-formimidoyl-L-glutamate. Its pathway is amino-acid degradation; L-histidine degradation into L-glutamate; N-formimidoyl-L-glutamate from L-histidine: step 3/3. Functionally, catalyzes the hydrolytic cleavage of the carbon-nitrogen bond in imidazolone-5-propanoate to yield N-formimidoyl-L-glutamate. It is the third step in the universal histidine degradation pathway. This Thermoplasma acidophilum (strain ATCC 25905 / DSM 1728 / JCM 9062 / NBRC 15155 / AMRC-C165) protein is Imidazolonepropionase.